Consider the following 378-residue polypeptide: tRNA-specific 2-thiouridylase MnmA (378 aa).

ATP-binding positions include 14–21 and Leu-40; that span reads AMSGGVDS. Residue Cys-109 is the Nucleophile of the active site. Cys-109 and Cys-208 are joined by a disulfide. Gly-133 lines the ATP pocket. The tract at residues 156–158 is interaction with tRNA; the sequence is KDQ. Catalysis depends on Cys-208, which acts as the Cysteine persulfide intermediate.

This sequence belongs to the MnmA/TRMU family.

The protein resides in the cytoplasm. It catalyses the reaction S-sulfanyl-L-cysteinyl-[protein] + uridine(34) in tRNA + AH2 + ATP = 2-thiouridine(34) in tRNA + L-cysteinyl-[protein] + A + AMP + diphosphate + H(+). In terms of biological role, catalyzes the 2-thiolation of uridine at the wobble position (U34) of tRNA, leading to the formation of s(2)U34. In Streptomyces griseus subsp. griseus (strain JCM 4626 / CBS 651.72 / NBRC 13350 / KCC S-0626 / ISP 5235), this protein is tRNA-specific 2-thiouridylase MnmA.